A 179-amino-acid polypeptide reads, in one-letter code: Adenine phosphoribosyltransferase (179 aa).

The protein belongs to the purine/pyrimidine phosphoribosyltransferase family. In terms of assembly, homodimer.

It localises to the cytoplasm. The catalysed reaction is AMP + diphosphate = 5-phospho-alpha-D-ribose 1-diphosphate + adenine. Its pathway is purine metabolism; AMP biosynthesis via salvage pathway; AMP from adenine: step 1/1. In terms of biological role, catalyzes a salvage reaction resulting in the formation of AMP, that is energically less costly than de novo synthesis. This chain is Adenine phosphoribosyltransferase, found in Nitrobacter winogradskyi (strain ATCC 25391 / DSM 10237 / CIP 104748 / NCIMB 11846 / Nb-255).